Here is a 338-residue protein sequence, read N- to C-terminus: Protein FosB (338 aa).

4 disordered regions span residues 1-54 (MFQA…PGSF), 79-191 (MAQS…DQLE), 222-276 (CKIP…PPNL), and 316-338 (GAQR…LLAL). 2 stretches are compositionally biased toward polar residues: residues 13–31 (SRCS…SVDS) and 79–88 (MAQSQGQPLA). S27 bears the Phosphoserine mark. Gly residues predominate over residues 113–124 (SSGGASGSGGPS). Residues 125 to 137 (TSGTTSGPGPARP) show a composition bias toward low complexity. One can recognise a bZIP domain in the interval 155–218 (EEKRRVRRER…ERLEFVLVAH (64 aa)). The interval 157 to 182 (KRRVRRERNKLAAAKCRNRRRELTDR) is basic motif. A leucine-zipper region spans residues 183 to 211 (LQAETDQLEEEKAELESEIAELQKEKERL). Pro residues predominate over residues 256 to 265 (LPPPPPPPLP). Composition is skewed to polar residues over residues 266–276 (FQTSQDAPPNL) and 318–338 (QRTS…LLAL).

This sequence belongs to the bZIP family. Fos subfamily. Heterodimer; binds to DNA as heterodimer. Component of an AP-1 transcription factor complex; composed of FOS-JUN heterodimers. As part of the AP-1 transcription factor complex, forms heterodimers with JUN, JUNB or JUND, thereby binding to the AP-1 consensus sequence and stimulating transcription. Interacts with the BAF multiprotein chromatin-remodeling complex subunits SMARCB1 and SMARCD1. Interacts with ARID1A and JUN. In terms of assembly, homodimer under oxidizing conditions and monomer under reducing conditions (in vitro). Heterodimer; binds to DNA as heterodimer. Forms heterodimers with JUNB, JUN or JUND; thereby binding to the AP-1 consensus sequence but does not stimulate transcription. Forms heterodimers with JUND under oxidizing conditions. In terms of processing, phosphorylated. Phosphorylated at Ser-27 by CSNK2A1; phosphorylation increases protein stability and transactivation potential. Expressed in the nucleus accumbens of the striatum (at protein level).

It is found in the nucleus. Functionally, heterodimerizes with proteins of the JUN family to form an AP-1 transcription factor complex, thereby enhancing their DNA binding activity to gene promoters containing an AP-1 consensus sequence 5'-TGA[GC]TCA-3' and enhancing their transcriptional activity. As part of the AP-1 complex, facilitates enhancer selection together with cell-type-specific transcription factors by collaboratively binding to nucleosomal enhancers and recruiting the SWI/SNF (BAF) chromatin remodeling complex to establish accessible chromatin. Together with JUN, plays a role in activation-induced cell death of T cells by binding to the AP-1 promoter site of FASLG/CD95L, and inducing its transcription in response to activation of the TCR/CD3 signaling pathway. Exhibits transactivation activity in vitro. Involved in the display of nurturing behavior towards newborns. May play a role in neurogenesis in the hippocampus and in learning and memory-related tasks by regulating the expression of various genes involved in neurogenesis, depression and epilepsy. Implicated in behavioral responses related to morphine reward and spatial memory. In terms of biological role, exhibits lower transactivation activity than isoform 1 in vitro. The heterodimer with JUN does not display any transcriptional activity, and may thereby act as an transcriptional inhibitor. May be involved in the regulation of neurogenesis in the hippocampus. May play a role in synaptic modifications in nucleus accumbens medium spiny neurons and thereby play a role in adaptive and pathological reward-dependent learning, including maladaptive responses involved in drug addiction. Seems to be more stably expressed with a half-life of ~9.5 hours in cell culture as compared to 1.5 hours half-life of isoform 1. The protein is Protein FosB (FOSB) of Homo sapiens (Human).